We begin with the raw amino-acid sequence, 452 residues long: Biotin carboxylase (452 aa).

The Biotin carboxylation domain occupies 1 to 445 (MFKKVLIANR…TTAFVTNHLK (445 aa)). ATP is bound by residues K116, K158, 164–165 (GG), 200–203 (EKAV), H208, and H235. Residues 120-317 (RTAMQTAGVP…LVEWQLLIAA (198 aa)) form the ATP-grasp domain. A hydrogencarbonate-binding site is contributed by K237. Positions 275 and 288 each coordinate ATP. Mg(2+)-binding residues include E275, E288, and N290. Mn(2+)-binding residues include E275, E288, and N290. R292, V295, and R338 together coordinate hydrogencarbonate. R292 is an active-site residue. R338 contacts biotin.

As to quaternary structure, acetyl-CoA carboxylase is a heterohexamer of biotin carboxyl carrier protein, biotin carboxylase and the two subunits of carboxyl transferase in a 2:2 complex. It depends on Mg(2+) as a cofactor. Mn(2+) serves as cofactor.

The catalysed reaction is N(6)-biotinyl-L-lysyl-[protein] + hydrogencarbonate + ATP = N(6)-carboxybiotinyl-L-lysyl-[protein] + ADP + phosphate + H(+). It functions in the pathway lipid metabolism; malonyl-CoA biosynthesis; malonyl-CoA from acetyl-CoA: step 1/1. This protein is a component of the acetyl coenzyme A carboxylase complex; first, biotin carboxylase catalyzes the carboxylation of the carrier protein and then the transcarboxylase transfers the carboxyl group to form malonyl-CoA. In Halalkalibacterium halodurans (strain ATCC BAA-125 / DSM 18197 / FERM 7344 / JCM 9153 / C-125) (Bacillus halodurans), this protein is Biotin carboxylase (accC).